The primary structure comprises 283 residues: MSERLPVLLQYLVPQRALTVFAGFVASGRWGGITTAIIRRFVRKYRVDMSEAAEPDIARYTRFNDFFTRALRPGARPLASAELVCPVDGAISQFGAIERDQIFQAKGHHYSTRALVGGDAELAARFQDGQFATLYLSPRDYHRIHMPCDGRLLRMIHVPGDLFSVNPVTARGVPGLFARNERVVCEFDGPLGPFVLVLVGATIVGSMATVWHGQVNPPRSGRLREWRYADRELRLRQGEEMGRFLLGSTVVALFPQGSVRFDPGWEPGRAVRLGEAMAFAPLL.

Residues Asp88, His145, and Ser248 each act as charge relay system; for autoendoproteolytic cleavage activity in the active site. Ser248 acts as the Schiff-base intermediate with substrate; via pyruvic acid; for decarboxylase activity in catalysis. A Pyruvic acid (Ser); by autocatalysis modification is found at Ser248.

Belongs to the phosphatidylserine decarboxylase family. PSD-B subfamily. Prokaryotic type I sub-subfamily. In terms of assembly, heterodimer of a large membrane-associated beta subunit and a small pyruvoyl-containing alpha subunit. Pyruvate is required as a cofactor. Is synthesized initially as an inactive proenzyme. Formation of the active enzyme involves a self-maturation process in which the active site pyruvoyl group is generated from an internal serine residue via an autocatalytic post-translational modification. Two non-identical subunits are generated from the proenzyme in this reaction, and the pyruvate is formed at the N-terminus of the alpha chain, which is derived from the carboxyl end of the proenzyme. The autoendoproteolytic cleavage occurs by a canonical serine protease mechanism, in which the side chain hydroxyl group of the serine supplies its oxygen atom to form the C-terminus of the beta chain, while the remainder of the serine residue undergoes an oxidative deamination to produce ammonia and the pyruvoyl prosthetic group on the alpha chain. During this reaction, the Ser that is part of the protease active site of the proenzyme becomes the pyruvoyl prosthetic group, which constitutes an essential element of the active site of the mature decarboxylase.

The protein localises to the cell membrane. The catalysed reaction is a 1,2-diacyl-sn-glycero-3-phospho-L-serine + H(+) = a 1,2-diacyl-sn-glycero-3-phosphoethanolamine + CO2. It functions in the pathway phospholipid metabolism; phosphatidylethanolamine biosynthesis; phosphatidylethanolamine from CDP-diacylglycerol: step 2/2. Functionally, catalyzes the formation of phosphatidylethanolamine (PtdEtn) from phosphatidylserine (PtdSer). In Methylibium petroleiphilum (strain ATCC BAA-1232 / LMG 22953 / PM1), this protein is Phosphatidylserine decarboxylase proenzyme.